The chain runs to 529 residues: Probable feruloyl esterase B-1 (529 aa).

The N-terminal stretch at 1–19 is a signal peptide; it reads MKISYFFVASLSYVSVARA. 2 cysteine pairs are disulfide-bonded: Cys-27/Cys-75 and Cys-63/Cys-114. Residues Asn-53, Asn-64, Asn-85, Asn-98, and Asn-138 are each glycosylated (N-linked (GlcNAc...) asparagine). 4 disulfide bridges follow: Cys-187/Cys-445, Cys-256/Cys-273, Cys-282/Cys-295, and Cys-505/Cys-527. The active-site Acyl-ester intermediate is the Ser-188. An N-linked (GlcNAc...) asparagine glycan is attached at Asn-233. Asp-257, Asp-260, Ala-262, Asp-264, and Leu-266 together coordinate Ca(2+). N-linked (GlcNAc...) asparagine glycosylation is found at Asn-286, Asn-290, and Asn-354. Catalysis depends on charge relay system residues Asp-404 and His-444.

It belongs to the tannase family.

Its subcellular location is the secreted. The enzyme catalyses feruloyl-polysaccharide + H2O = ferulate + polysaccharide.. Functionally, involved in degradation of plant cell walls. Hydrolyzes the feruloyl-arabinose ester bond in arabinoxylans as well as the feruloyl-galactose and feruloyl-arabinose ester bonds in pectin. This chain is Probable feruloyl esterase B-1 (faeB-1), found in Aspergillus terreus (strain NIH 2624 / FGSC A1156).